Reading from the N-terminus, the 259-residue chain is Phosphatidylglycerol--prolipoprotein diacylglyceryl transferase (259 aa).

Transmembrane regions (helical) follow at residues 9–29 (IIFS…VIGI), 55–75 (FITY…VLLY), 92–112 (EGGM…YLFC), and 117–137 (INFL…LFLG). Residue Arg138 coordinates a 1,2-diacyl-sn-glycero-3-phospho-(1'-sn-glycerol). Helical transmembrane passes span 172–192 (QLYE…YTTF), 201–221 (GLNS…IEIF), and 228–248 (IGFI…MLLL).

Belongs to the Lgt family.

Its subcellular location is the cell inner membrane. The catalysed reaction is L-cysteinyl-[prolipoprotein] + a 1,2-diacyl-sn-glycero-3-phospho-(1'-sn-glycerol) = an S-1,2-diacyl-sn-glyceryl-L-cysteinyl-[prolipoprotein] + sn-glycerol 1-phosphate + H(+). The protein operates within protein modification; lipoprotein biosynthesis (diacylglyceryl transfer). Functionally, catalyzes the transfer of the diacylglyceryl group from phosphatidylglycerol to the sulfhydryl group of the N-terminal cysteine of a prolipoprotein, the first step in the formation of mature lipoproteins. The chain is Phosphatidylglycerol--prolipoprotein diacylglyceryl transferase from Rickettsia conorii (strain ATCC VR-613 / Malish 7).